The following is a 2100-amino-acid chain: MPFSLPSFAQKLVLRYALSRLGLVDTDTLDLATLGITWGQRSTFELRNVGLKLEKLSAHLPPYCTLTKGSVSLLRVTVPANLHNSSIIVEVDGVDARVRLLPDKPEQNAPPTRSKGTAEDEGQDGHSVLPSTADLAQSFLESEPKEETEELQAAILSQSQYPEHLDAQSDDGEEDLGLYDGLSLPAFIAGFLKGVIDRLQLNIANVSLRVDTEVQRDGVLKDETQDPISGLFTIQEIAIDSTATSASEDSRLKIGKRMVSLSGIHAMIMSDAEVFSNYSRFNAPDIPSTVHSKSTHTPLRPRSPQPSSSGSDSCGDMSRSTILDPSSMYGSRLTVDSHGDESRHLESSVYSTTGRFSDADSDDENDLEFYSQATTGMLDSHYDERLLDNPAYLDEALKSQFDDHLEDSTIFPKDCPSTPVRDQTPRPHVSKSPSSSPEHYMYHSVHESNFPVGGGIRDNEPDSATSARGKTPDCQTEQESPSTSKICPAVSQPEDLSASRIFTHEEAQSMYMSAMSQSSTTSFDPDMPGAWGSSKRIDTSDPDQKEQPLSGDTDTEAKGASHDFDTSQNSPEAQTGEDDERESVHNSPQYISGVVKEILAIDRIIIWLPSVDSQDSEEIPKTDIDSKPVDPMVESTITLADSVTPDLLANTRSRLAQSAFRRGSVSSIVSSRHLPISRTKPTTQKHEDFDGLNDPQTTRAVEIDITSLTAKLDIASGWLLVKIGQRITDVSTSTSKQTKISEAASEESSPSFFRLNLTSCSLKFLERVPAQPYPLSSAPSLSQLQSGIPIEETILHLTLSGTSIDFAAIGNTTKLRLDVMKFVLGHMSYDIISFDESLRMRESTRDVTSPGQKDISLRVIKSSESTTVNLTTLPICLSLDLQELDETLGWFGGLSTVLELGSSIASASTVKGEQPCSPPRPRRGVHFADPVPPSSPSTTNHAALKANCRIGGIVLRVIGEHCTVQLGTTAAKLVSRFEGIALQIDKASVGGPHLRKEPSPSPPSLDFENIRFEYLYGPKEVDLDRLLGLLTPSKDKFDEDDDIMLDTLFRQRRQGAVLRLTVGHADFAVPNPTALQPLSHLGEELAKLATVAKYLPQDDRPGILILALVREFEGRVHVNNEAGDITIISHNLEAGYVTFPSLLATRISTVTVVRNGSEELVAEVIPEDTEEARTHDPLPMIMARFIADEMEPTVKIKLYNVRVEYTVPSITAFLGLNNQMAAEDVAANMAQSVLNLADLKAHHEPGSDLSERDSIGSGDDRSAMLPRLSVGMKDCGIGLNPRKSPAKALVIFTRASFSGALHETKPSEALLDIRKASVMIIDNVENLGSAENYRHRMSSGARSGQIQHLQSIGFVPVCDISSASVALKVMQLDVEGEKSLDIEVRDDLLVLETCADSTQTLISILSGLAPLSPPITERKYRTEVIRIEDMLNSLSGDAFATDIVPDSDYEVEGENDGQDGDGAEEIEYVSVFYPSHGDSGPQGRGATTPRFGNEGSASAGTSRILGSFHSEAQMSSSIPELEFQEDHFAKQSAVGDTAHRWDSSRNTYTLATEVKLRDSPLRIRVRDVHVIWNLYDGYDWQRTRDTISKAVRDVQAKAAEKFARRPGNRLSADFEEDEESVIGDFLFNSVYIGIPANRDPRELSHDINRNIDDLASETMSFATSTTVTGLQNQVPGTKREKLRLARSKHHKMTFELKGISADLIVFPPHSGETQSSLDIRVEDLEIFDHIPTSTWKKFATYMRDVGEREIGTSMVHLEILNVKPVPDLAASEVVLKATVLPLRLHVDQDALDFLSRFFEFKDDSAPSEPSPEDVPFLQRAEVNAIRVRLDFKPKRVDYAGLRSGRTTEFMNFFVLDEADMVLQHVIIYGVSGFDRLGRTLNDIWMPDIKANQLPTVLAGIAPVRSLVNIGGGVKDLVLVPMREYKKDGRIVRSIQKGAVQFAKTTTNELLRFGAKLAIGTQTALQSAEDFLNSPRGSPSRPSTSDGRWDDNGVDEGERPRISLYADQPLGVAQGLRGAYSSLERDILMTRDAIVAMPSEVLESGSATEAARRLLGRTPTVVLRPAIGASKAVSQTLLGVSNALDPKNRRKIDDKYKKHKV.

7 disordered regions span residues 101 to 129 (LPDK…HSVL), 288 to 363 (STVH…DSDD), 410 to 492 (IFPK…AVSQ), 512 to 588 (MSAM…HNSP), 674 to 694 (LPIS…GLND), 1474 to 1499 (PSHG…SASA), and 1969 to 1996 (DFLN…VDEG). A compositionally biased stretch (low complexity) spans 300–320 (RPRSPQPSSSGSDSCGDMSRS). A compositionally biased stretch (basic and acidic residues) spans 335–346 (VDSHGDESRHLE). The segment covering 462-485 (DSATSARGKTPDCQTEQESPSTSK) has biased composition (polar residues). The span at 512–522 (MSAMSQSSTTS) shows a compositional bias: low complexity. Basic and acidic residues-rich tracts occupy residues 535–546 (KRIDTSDPDQKE) and 555–565 (TEAKGASHDFD). The segment covering 1973 to 1985 (SPRGSPSRPSTSD) has biased composition (low complexity). Residues 1986–1996 (GRWDDNGVDEG) show a composition bias toward basic and acidic residues.

It belongs to the ATG2 family.

The protein resides in the preautophagosomal structure membrane. The protein localises to the endoplasmic reticulum membrane. It catalyses the reaction a 1,2-diacyl-sn-glycero-3-phosphocholine(in) = a 1,2-diacyl-sn-glycero-3-phosphocholine(out). The enzyme catalyses a 1,2-diacyl-sn-glycero-3-phospho-L-serine(in) = a 1,2-diacyl-sn-glycero-3-phospho-L-serine(out). It carries out the reaction a 1,2-diacyl-sn-glycero-3-phosphoethanolamine(in) = a 1,2-diacyl-sn-glycero-3-phosphoethanolamine(out). Its function is as follows. Lipid transfer protein required for autophagosome completion and peroxisome degradation. Tethers the edge of the isolation membrane (IM) to the endoplasmic reticulum (ER) and mediates direct lipid transfer from ER to IM for IM expansion. ATG2 binds to the ER exit site (ERES), which is the membrane source for autophagosome formation, using basic residues in its N-terminal region (NR) and to the expanding edge of the IM through its C-terminal region. The latter binding is assisted by an ATG18-PtdIns3P interaction. ATG2 then extracts phospholipids from the membrane source using its NR and transfers them to ATG9 to the IM through its predicted beta-sheet-rich structure for membrane expansion. This chain is Autophagy-related protein 2 (ATG2), found in Coccidioides immitis (strain RS) (Valley fever fungus).